A 420-amino-acid polypeptide reads, in one-letter code: Na(+)/H(+) antiporter NhaA (420 aa).

A run of 11 helical transmembrane segments spans residues 4-24, 70-90, 104-124, 132-152, 165-185, 192-212, 233-250, 299-319, 323-343, 361-381, and 395-415; these read VWNF…IALI, DLLM…AVIL, LVAT…IAYF, AVAN…YLVG, FLLL…AIFY, PAWL…ANWL, LSFW…YGFM, VEII…SAMG, WLVL…FGWL, LVVI…VASV, and GALF…LTQV.

This sequence belongs to the NhaA Na(+)/H(+) (TC 2.A.33) antiporter family.

It localises to the cell inner membrane. It catalyses the reaction Na(+)(in) + 2 H(+)(out) = Na(+)(out) + 2 H(+)(in). Its function is as follows. Na(+)/H(+) antiporter that extrudes sodium in exchange for external protons. The sequence is that of Na(+)/H(+) antiporter NhaA from Jannaschia sp. (strain CCS1).